A 146-amino-acid polypeptide reads, in one-letter code: Hemoglobin subunit theta (146 aa).

One can recognise a Globin domain in the interval 2-146 (HFTAEEKSVI…VATALAHKYH (145 aa)). Heme b-binding residues include His-63 and His-92.

This sequence belongs to the globin family.

This Sus scrofa (Pig) protein is Hemoglobin subunit theta.